The primary structure comprises 219 residues: Deoxyribose-phosphate aldolase (219 aa).

Aspartate 93 functions as the Proton donor/acceptor in the catalytic mechanism. Residue lysine 154 is the Schiff-base intermediate with acetaldehyde of the active site. Lysine 179 (proton donor/acceptor) is an active-site residue.

Belongs to the DeoC/FbaB aldolase family. DeoC type 1 subfamily.

It is found in the cytoplasm. The catalysed reaction is 2-deoxy-D-ribose 5-phosphate = D-glyceraldehyde 3-phosphate + acetaldehyde. It participates in carbohydrate degradation; 2-deoxy-D-ribose 1-phosphate degradation; D-glyceraldehyde 3-phosphate and acetaldehyde from 2-deoxy-alpha-D-ribose 1-phosphate: step 2/2. Functionally, catalyzes a reversible aldol reaction between acetaldehyde and D-glyceraldehyde 3-phosphate to generate 2-deoxy-D-ribose 5-phosphate. The sequence is that of Deoxyribose-phosphate aldolase from Haloquadratum walsbyi (strain DSM 16790 / HBSQ001).